A 41-amino-acid chain; its full sequence is Large ribosomal subunit protein bL36B (41 aa).

The protein belongs to the bacterial ribosomal protein bL36 family.

This Neisseria meningitidis serogroup C (strain 053442) protein is Large ribosomal subunit protein bL36B.